Here is a 423-residue protein sequence, read N- to C-terminus: AUGMIN subunit 4 (423 aa).

Positions 267 to 287 form a coiled coil; it reads IEEIERDEAALREDLYSADRK.

This sequence belongs to the HAUS4 family. As to quaternary structure, part of the augmin complex composed of 8 subunits. The complex acts on microtubules and interacts with gamma-tubulin in spindles and the phragmoplast.

The protein localises to the cytoplasm. Its subcellular location is the cytoskeleton. The protein resides in the spindle. It localises to the phragmoplast. Functionally, involved in microtubules reorganization during spindle and phragmoplast development. The polypeptide is AUGMIN subunit 4 (AUG4) (Arabidopsis thaliana (Mouse-ear cress)).